The primary structure comprises 265 residues: tRNA pseudouridine synthase A (265 aa).

Asp52 serves as the catalytic Nucleophile. Tyr112 contacts substrate.

This sequence belongs to the tRNA pseudouridine synthase TruA family. Homodimer.

The catalysed reaction is uridine(38/39/40) in tRNA = pseudouridine(38/39/40) in tRNA. Formation of pseudouridine at positions 38, 39 and 40 in the anticodon stem and loop of transfer RNAs. The polypeptide is tRNA pseudouridine synthase A (Akkermansia muciniphila (strain ATCC BAA-835 / DSM 22959 / JCM 33894 / BCRC 81048 / CCUG 64013 / CIP 107961 / Muc)).